Consider the following 385-residue polypeptide: Ribosomal RNA large subunit methyltransferase G (385 aa).

Belongs to the methyltransferase superfamily. RlmG family.

The protein resides in the cytoplasm. It catalyses the reaction guanosine(1835) in 23S rRNA + S-adenosyl-L-methionine = N(2)-methylguanosine(1835) in 23S rRNA + S-adenosyl-L-homocysteine + H(+). In terms of biological role, specifically methylates the guanine in position 1835 (m2G1835) of 23S rRNA. The chain is Ribosomal RNA large subunit methyltransferase G from Vibrio campbellii (strain ATCC BAA-1116).